A 396-amino-acid chain; its full sequence is 3-amino-4-hydroxybenzoate 2-monooxygenase PtmB3 (396 aa).

Residues Ala-19, 38–39 (EQ), and Arg-112 each bind FAD. The Proton acceptor role is filled by Tyr-217. Asp-295 lines the FAD pocket. Positions 352–371 (RERGHEFHLPDGPQQRLRDR) are disordered.

The protein belongs to the 6-hydroxynicotinate 3-monooxygenase family. FAD serves as cofactor.

The catalysed reaction is 3-amino-4-hydroxybenzoate + NADPH + O2 + H(+) = 3-amino-2,4-dihydroxybenzoate + NADP(+) + H2O. Its pathway is antibiotic biosynthesis. Its function is as follows. Part of a gene cluster involved in the biosynthesis of thioplatensimycin (thioPTM) and platensimycin (PTM), potent and selective inhibitors of bacterial and mammalian fatty acid synthases. Catalyzes the hydroxylation of 3-amino-4-hydroxybenzoate (3,4-AHBA) to 3-amino-2,4-dihydroxybenzoate (3,2,4-ADHBA). The protein is 3-amino-4-hydroxybenzoate 2-monooxygenase PtmB3 of Streptomyces platensis.